A 199-amino-acid chain; its full sequence is 5'-deoxynucleotidase YfbR (199 aa).

Residues 18-19 (RW) and His33 each bind substrate. In terms of domain architecture, HD spans 30 to 142 (VSEHSLQVAM…VKQADALCAY (113 aa)). A divalent metal cation contacts are provided by His33, His68, and Asp69. Substrate is bound by residues Asp69, 77–80 (DLPT), and Asp137. Position 137 (Asp137) interacts with a divalent metal cation.

Belongs to the 5DNU family. As to quaternary structure, homodimer. A divalent metal cation serves as cofactor.

The protein resides in the cytoplasm. It carries out the reaction a 2'-deoxyribonucleoside 5'-phosphate + H2O = a 2'-deoxyribonucleoside + phosphate. Catalyzes the strictly specific dephosphorylation of 2'-deoxyribonucleoside 5'-monophosphates. This chain is 5'-deoxynucleotidase YfbR, found in Salmonella typhi.